A 138-amino-acid chain; its full sequence is Small ribosomal subunit protein uS11c (138 aa).

The tract at residues 1–24 is disordered; it reads MAKSPPRSGSRRPGRIGSRKSGRR. The segment covering 9–24 has biased composition (basic residues); it reads GSRRPGRIGSRKSGRR.

Belongs to the universal ribosomal protein uS11 family. In terms of assembly, part of the 30S ribosomal subunit.

It localises to the plastid. It is found in the chloroplast. This Citrus sinensis (Sweet orange) protein is Small ribosomal subunit protein uS11c.